The following is a 47-amino-acid chain: Ribosome-inactivating protein luffin P1 (47 aa).

2 disulfides stabilise this stretch: Cys12–Cys33 and Cys16–Cys29.

In terms of assembly, homotetramer.

It catalyses the reaction Endohydrolysis of the N-glycosidic bond at one specific adenosine on the 28S rRNA.. In terms of biological role, inhibits protein synthesis in animal cells. This is Ribosome-inactivating protein luffin P1 from Luffa aegyptiaca (Sponge gourd).